Consider the following 829-residue polypeptide: Leucine--tRNA ligase (829 aa).

A 'HIGH' region motif is present at residues 34–44 (PYPSGNIHMGH). A 'KMSKS' region motif is present at residues 591-595 (KMSKS). K594 serves as a coordination point for ATP.

This sequence belongs to the class-I aminoacyl-tRNA synthetase family.

Its subcellular location is the cytoplasm. The enzyme catalyses tRNA(Leu) + L-leucine + ATP = L-leucyl-tRNA(Leu) + AMP + diphosphate. This Ehrlichia canis (strain Jake) protein is Leucine--tRNA ligase.